The sequence spans 322 residues: Fructose-1,6-bisphosphatase class 1 (322 aa).

Mg(2+) is bound by residues Glu-84, Asp-103, Leu-105, and Asp-106. Residues 106-109 (DGSS), Asn-198, and Lys-264 each bind substrate. Mg(2+) is bound at residue Glu-270.

Belongs to the FBPase class 1 family. As to quaternary structure, homotetramer. Mg(2+) is required as a cofactor.

The protein localises to the cytoplasm. It catalyses the reaction beta-D-fructose 1,6-bisphosphate + H2O = beta-D-fructose 6-phosphate + phosphate. Its pathway is carbohydrate biosynthesis; gluconeogenesis. The protein is Fructose-1,6-bisphosphatase class 1 of Colwellia psychrerythraea (strain 34H / ATCC BAA-681) (Vibrio psychroerythus).